Consider the following 235-residue polypeptide: NAD-dependent protein deacylase (235 aa).

A Deacetylase sirtuin-type domain is found at 1 to 235 (MDLRLFKNIV…VPRFITQFLE (235 aa)). NAD(+) is bound at residue 14-33 (GAGISAESGIRTFRDQDGLW). Y58 and R61 together coordinate substrate. An NAD(+)-binding site is contributed by 95–98 (QNVD). The active-site Proton acceptor is H113. Zn(2+)-binding residues include C121, C124, C140, and C143. NAD(+)-binding positions include 180–182 (GTS), 204–206 (NLK), and A222.

The protein belongs to the sirtuin family. Class III subfamily. Requires Zn(2+) as cofactor.

The protein localises to the cytoplasm. The enzyme catalyses N(6)-acetyl-L-lysyl-[protein] + NAD(+) + H2O = 2''-O-acetyl-ADP-D-ribose + nicotinamide + L-lysyl-[protein]. The catalysed reaction is N(6)-succinyl-L-lysyl-[protein] + NAD(+) + H2O = 2''-O-succinyl-ADP-D-ribose + nicotinamide + L-lysyl-[protein]. Its function is as follows. NAD-dependent lysine deacetylase and desuccinylase that specifically removes acetyl and succinyl groups on target proteins. Modulates the activities of several proteins which are inactive in their acylated form. This Bdellovibrio bacteriovorus (strain ATCC 15356 / DSM 50701 / NCIMB 9529 / HD100) protein is NAD-dependent protein deacylase.